Here is a 323-residue protein sequence, read N- to C-terminus: Probable pectate lyase A (323 aa).

A signal peptide spans 1–20 (MTNFKWIVAAAGLLSGQVLA). N-linked (GlcNAc...) asparagine glycosylation occurs at Asn-95. Ca(2+) is bound by residues Asp-136, Asp-165, and Asp-169. Arg-222 is an active-site residue.

The protein belongs to the polysaccharide lyase 1 family. The cofactor is Ca(2+).

The protein localises to the secreted. The catalysed reaction is Eliminative cleavage of (1-&gt;4)-alpha-D-galacturonan to give oligosaccharides with 4-deoxy-alpha-D-galact-4-enuronosyl groups at their non-reducing ends.. Pectinolytic enzyme consist of four classes of enzymes: pectin lyase, polygalacturonase, pectin methylesterase and rhamnogalacturonase. Among pectinolytic enzymes, pectin lyase is the most important in depolymerization of pectin, since it cleaves internal glycosidic bonds of highly methylated pectins. Favors pectate, the anion, over pectin, the methyl ester. This Aspergillus niger (strain ATCC MYA-4892 / CBS 513.88 / FGSC A1513) protein is Probable pectate lyase A (plyA).